The chain runs to 948 residues: RNA polymerase-associated protein RapA (948 aa).

The Helicase ATP-binding domain maps to 164–332 (EVADRSAPRV…FARLRLLDPN (169 aa)). 177–184 (DEVGLGKT) contributes to the ATP binding site. Positions 278–281 (DEAH) match the DEAH box motif. The 155-residue stretch at 473 to 627 (RVDWLIDTLK…TCPTGNALQH (155 aa)) folds into the Helicase C-terminal domain.

The protein belongs to the SNF2/RAD54 helicase family. RapA subfamily. As to quaternary structure, interacts with the RNAP. Has a higher affinity for the core RNAP than for the holoenzyme. Its ATPase activity is stimulated by binding to RNAP.

Functionally, transcription regulator that activates transcription by stimulating RNA polymerase (RNAP) recycling in case of stress conditions such as supercoiled DNA or high salt concentrations. Probably acts by releasing the RNAP, when it is trapped or immobilized on tightly supercoiled DNA. Does not activate transcription on linear DNA. Probably not involved in DNA repair. In Pseudomonas putida (strain ATCC 47054 / DSM 6125 / CFBP 8728 / NCIMB 11950 / KT2440), this protein is RNA polymerase-associated protein RapA.